The sequence spans 349 residues: Isopentenyl-diphosphate delta-isomerase (349 aa).

Arg-6 to Lys-7 lines the substrate pocket. FMN is bound by residues Ala-62–Thr-64, Ser-93, and Asn-122. Residue Gln-152 participates in substrate binding. A Mg(2+)-binding site is contributed by Glu-153. FMN contacts are provided by residues Lys-184, Thr-214, Gly-258 to Gly-259, and Ala-280 to Gly-281.

Belongs to the IPP isomerase type 2 family. As to quaternary structure, homooctamer. Dimer of tetramers. Requires FMN as cofactor. NADPH serves as cofactor. Mg(2+) is required as a cofactor.

Its subcellular location is the cytoplasm. The catalysed reaction is isopentenyl diphosphate = dimethylallyl diphosphate. In terms of biological role, involved in the biosynthesis of isoprenoids. Catalyzes the 1,3-allylic rearrangement of the homoallylic substrate isopentenyl (IPP) to its allylic isomer, dimethylallyl diphosphate (DMAPP). The protein is Isopentenyl-diphosphate delta-isomerase of Bacillus cereus (strain ATCC 10987 / NRS 248).